The sequence spans 195 residues: Orotate phosphoribosyltransferase (195 aa).

5-phospho-alpha-D-ribose 1-diphosphate-binding positions include Arg86, Lys90, His92, and 111-119; that span reads DDVATTGVS. Residues Thr115 and Arg143 each coordinate orotate.

This sequence belongs to the purine/pyrimidine phosphoribosyltransferase family. PyrE subfamily. As to quaternary structure, homodimer. Mg(2+) is required as a cofactor.

The enzyme catalyses orotidine 5'-phosphate + diphosphate = orotate + 5-phospho-alpha-D-ribose 1-diphosphate. The protein operates within pyrimidine metabolism; UMP biosynthesis via de novo pathway; UMP from orotate: step 1/2. In terms of biological role, catalyzes the transfer of a ribosyl phosphate group from 5-phosphoribose 1-diphosphate to orotate, leading to the formation of orotidine monophosphate (OMP). The protein is Orotate phosphoribosyltransferase of Saccharolobus solfataricus (strain ATCC 35092 / DSM 1617 / JCM 11322 / P2) (Sulfolobus solfataricus).